Consider the following 494-residue polypeptide: Ketol-acid reductoisomerase (NADP(+)) (494 aa).

Residues 14–208 (LDQLGRCRFM…GGHRAGCLES (195 aa)) enclose the KARI N-terminal Rossmann domain. Residues 45-48 (CGAQ), Arg68, Arg76, Ser78, and 108-110 (DKQ) each bind NADP(+). His132 is a catalytic residue. Gly158 serves as a coordination point for NADP(+). 2 consecutive KARI C-terminal knotted domains span residues 209 to 344 (SFVA…NYPD) and 345 to 487 (SSLE…MTDM). 4 residues coordinate Mg(2+): Asp217, Glu221, Glu389, and Glu393. Ser414 provides a ligand contact to substrate.

Belongs to the ketol-acid reductoisomerase family. Requires Mg(2+) as cofactor.

It catalyses the reaction (2R)-2,3-dihydroxy-3-methylbutanoate + NADP(+) = (2S)-2-acetolactate + NADPH + H(+). The enzyme catalyses (2R,3R)-2,3-dihydroxy-3-methylpentanoate + NADP(+) = (S)-2-ethyl-2-hydroxy-3-oxobutanoate + NADPH + H(+). Its pathway is amino-acid biosynthesis; L-isoleucine biosynthesis; L-isoleucine from 2-oxobutanoate: step 2/4. The protein operates within amino-acid biosynthesis; L-valine biosynthesis; L-valine from pyruvate: step 2/4. In terms of biological role, involved in the biosynthesis of branched-chain amino acids (BCAA). Catalyzes an alkyl-migration followed by a ketol-acid reduction of (S)-2-acetolactate (S2AL) to yield (R)-2,3-dihydroxy-isovalerate. In the isomerase reaction, S2AL is rearranged via a Mg-dependent methyl migration to produce 3-hydroxy-3-methyl-2-ketobutyrate (HMKB). In the reductase reaction, this 2-ketoacid undergoes a metal-dependent reduction by NADPH to yield (R)-2,3-dihydroxy-isovalerate. This Aliivibrio salmonicida (strain LFI1238) (Vibrio salmonicida (strain LFI1238)) protein is Ketol-acid reductoisomerase (NADP(+)).